The following is a 337-amino-acid chain: G-protein coupled receptor 26 (337 aa).

At 1 to 10 (MNSWDAGLAG) the chain is on the extracellular side. Residues 11–31 (LLVGTMGVSLLSNALVLLCLL) traverse the membrane as a helical segment. At 32-47 (HSADIRRQAPALFTLN) the chain is on the cytoplasmic side. Residues 48–68 (LTCGNLLCTVVNMPLTLAGVV) form a helical membrane-spanning segment. The Extracellular portion of the chain corresponds to 69 to 81 (AQRQPAGDRLCRL). The cysteines at positions 79 and 156 are disulfide-linked. A helical membrane pass occupies residues 82–102 (AAFLDTFLAANSMLSMAALSI). At 103–123 (DRWVAVVFPLSYRAKMRLRDA) the chain is on the cytoplasmic side. The helical transmembrane segment at 124–144 (ALMVAYTWLHALTFPAAALAL) threads the bilayer. At 145-168 (SWLGFHQLYASCTLCSRRPDERLR) the chain is on the extracellular side. The helical transmembrane segment at 169–189 (FAVFTGAFHALSFLLSFVVLC) threads the bilayer. Over 190-245 (CTYLKVLKVARFHCKRIDVITMQTLVLLVDLHPSVRERCLEEQKRRRQRATKKIST) the chain is Cytoplasmic. Residues 246-266 (FIGTFLVCFAPYVITRLVELF) traverse the membrane as a helical segment. Topologically, residues 267 to 276 (STVPIGSHWG) are extracellular. The chain crosses the membrane as a helical span at residues 277–297 (VLSKCLAYSKAASDPFVYSLL). At 298–337 (RHQYRKSCKEILNRLLHRRSIHSSGLTGDSHSQNILPVSE) the chain is on the cytoplasmic side.

The protein belongs to the G-protein coupled receptor 1 family. In terms of tissue distribution, highly expressed in the CNS, the highest expression is seen in the amygdala, hippocampus and thalamus. Weak expression is detected in testis. Down-regulated in glioblastoma.

The protein resides in the cell membrane. Its function is as follows. Orphan receptor. Displays a significant level of constitutive activity. Its effect is mediated by G(s)-alpha protein that stimulate adenylate cyclase, resulting in an elevation of intracellular cAMP. The polypeptide is G-protein coupled receptor 26 (GPR26) (Homo sapiens (Human)).